The following is a 608-amino-acid chain: Phosphomethylpyrimidine synthase (608 aa).

Substrate contacts are provided by residues Asn216, Met245, Tyr274, His310, 330-332 (SRG), 371-374 (DGLR), and Glu410. Zn(2+) is bound at residue His414. Substrate is bound at residue Tyr437. His478 serves as a coordination point for Zn(2+). Residues Cys558, Cys561, and Cys566 each contribute to the [4Fe-4S] cluster site.

This sequence belongs to the ThiC family. In terms of assembly, homodimer. It depends on [4Fe-4S] cluster as a cofactor.

It carries out the reaction 5-amino-1-(5-phospho-beta-D-ribosyl)imidazole + S-adenosyl-L-methionine = 4-amino-2-methyl-5-(phosphooxymethyl)pyrimidine + CO + 5'-deoxyadenosine + formate + L-methionine + 3 H(+). The protein operates within cofactor biosynthesis; thiamine diphosphate biosynthesis. Functionally, catalyzes the synthesis of the hydroxymethylpyrimidine phosphate (HMP-P) moiety of thiamine from aminoimidazole ribotide (AIR) in a radical S-adenosyl-L-methionine (SAM)-dependent reaction. The sequence is that of Phosphomethylpyrimidine synthase from Ruegeria sp. (strain TM1040) (Silicibacter sp.).